The following is a 177-amino-acid chain: Thymidine kinase (177 aa).

11 to 18 contributes to the ATP binding site; the sequence is GPMFSGKS. Glutamate 83 serves as the catalytic Proton acceptor. Phenylalanine 113 is a substrate binding site. Residues cysteine 138 and cysteine 141 each coordinate Zn(2+). Residue 157–161 participates in substrate binding; that stretch reads IEIIG. Residues cysteine 170 and cysteine 173 each contribute to the Zn(2+) site.

Belongs to the thymidine kinase family. Homotetramer. Two molecules of substrate bind to each enzyme tetramer.

It carries out the reaction thymidine + ATP = dTMP + ADP + H(+). Phosphorylates thymidine and thymidine analogs, such as azidothymidine (AZT). Part of the salvage pathway for pyrimidine deoxyribonucleotide synthesis. This chain is Thymidine kinase (OPG101), found in Vaccinia virus (strain Tian Tan) (VACV).